The chain runs to 300 residues: 3-dehydrocarnitine:acetyl-CoA trimethylamine transferase (300 aa).

Positions 51, 53, and 254 each coordinate Zn(2+).

Belongs to the BKACE family. Homotetramer. The cofactor is Zn(2+).

The catalysed reaction is 3-dehydrocarnitine + acetyl-CoA = N,N,N-trimethylglycyl-CoA + acetoacetate. The protein operates within amine and polyamine metabolism; carnitine metabolism. Functionally, catalyzes the condensation of dehydrocarnitine and acetyl-CoA, forming acetoacetate and betainyl-CoA (N,N,N-trimethylglycyl-CoA). Is involved in a L-carnitine degradation pathway that allows R.meliloti to grow on L-carnitine as the sole source of carbon and nitrogen. This chain is 3-dehydrocarnitine:acetyl-CoA trimethylamine transferase, found in Rhizobium meliloti (strain 1021) (Ensifer meliloti).